The chain runs to 506 residues: Light-independent protochlorophyllide reductase subunit B (506 aa).

Residue Asp-36 participates in [4Fe-4S] cluster binding. Asp-279 acts as the Proton donor in catalysis. 414–415 (GL) contacts substrate.

Belongs to the ChlB/BchB/BchZ family. In terms of assembly, protochlorophyllide reductase is composed of three subunits; BchL, BchN and BchB. Forms a heterotetramer of two BchB and two BchN subunits. It depends on [4Fe-4S] cluster as a cofactor.

The catalysed reaction is chlorophyllide a + oxidized 2[4Fe-4S]-[ferredoxin] + 2 ADP + 2 phosphate = protochlorophyllide a + reduced 2[4Fe-4S]-[ferredoxin] + 2 ATP + 2 H2O. It functions in the pathway porphyrin-containing compound metabolism; bacteriochlorophyll biosynthesis (light-independent). Functionally, component of the dark-operative protochlorophyllide reductase (DPOR) that uses Mg-ATP and reduced ferredoxin to reduce ring D of protochlorophyllide (Pchlide) to form chlorophyllide a (Chlide). This reaction is light-independent. The NB-protein (BchN-BchB) is the catalytic component of the complex. The sequence is that of Light-independent protochlorophyllide reductase subunit B from Methylobacterium sp. (strain 4-46).